A 233-amino-acid polypeptide reads, in one-letter code: 5-demethoxyubiquinone hydroxylase, mitochondrial (233 aa).

Residues 1-15 constitute a mitochondrion transit peptide; the sequence is MLSRVSVFKPASRGF. A phosphoserine mark is found at Ser20 and Ser28. Phosphothreonine is present on Thr32. Residues Glu63, Glu95, His98, Glu147, Glu194, and His197 each coordinate Fe cation.

Belongs to the COQ7 family. In terms of assembly, component of a multi-subunit COQ enzyme complex, composed of at least COQ3, COQ4, COQ5, COQ6, COQ7 and COQ9. Fe cation is required as a cofactor. Post-translationally, phosphorylated. Dephosphorylated by PTC7; dephosphorylation is essential for enzyme activation.

It localises to the mitochondrion inner membrane. The enzyme catalyses a 5-methoxy-2-methyl-3-(all-trans-polyprenyl)benzene-1,4-diol + AH2 + O2 = a 3-demethylubiquinol + A + H2O. It catalyses the reaction a 5-methoxy-2-methyl-3-(all-trans-polyprenyl)benzoquinone + NADH + O2 = a 3-demethylubiquinone + NAD(+) + H2O. Its pathway is cofactor biosynthesis; ubiquinone biosynthesis. Dephosphorylation by PTC7 leads to activation. Functionally, catalyzes the hydroxylation of 2-hexaprenyl-3-methyl-6-methoxy-1,4-benzoquinol (DMQH2) during ubiquinone biosynthesis. Also catalyzes the hydroxylation of the 5-methoxy-2-methyl-3-(all-trans-polyprenyl)benzoquinone at the C6 position and participates in the biosynthesis of ubiquinone. Also has a structural role in the COQ enzyme complex, stabilizing COQ3 and COQ4 polypeptides. This Saccharomyces cerevisiae (strain ATCC 204508 / S288c) (Baker's yeast) protein is 5-demethoxyubiquinone hydroxylase, mitochondrial.